The primary structure comprises 404 residues: Glucose-1-phosphate adenylyltransferase (404 aa).

Residues Y99, G164, 179–180, and S197 contribute to the alpha-D-glucose 1-phosphate site; that span reads EK.

The protein belongs to the bacterial/plant glucose-1-phosphate adenylyltransferase family. As to quaternary structure, homotetramer.

The enzyme catalyses alpha-D-glucose 1-phosphate + ATP + H(+) = ADP-alpha-D-glucose + diphosphate. Its pathway is glycan biosynthesis; glycogen biosynthesis. Involved in the biosynthesis of ADP-glucose, a building block required for the elongation reactions to produce glycogen. Catalyzes the reaction between ATP and alpha-D-glucose 1-phosphate (G1P) to produce pyrophosphate and ADP-Glc. In Nocardia farcinica (strain IFM 10152), this protein is Glucose-1-phosphate adenylyltransferase.